The sequence spans 367 residues: Zinc metalloproteinase nas-22 (367 aa).

Positions 1–16 (MKSFFILLSILQECYG) are cleaved as a signal peptide. In terms of domain architecture, Peptidase M12A spans 41–237 (VLIRGSDEER…LMINKYYECS (197 aa)). 2 N-linked (GlcNAc...) asparagine glycosylation sites follow: asparagine 56 and asparagine 85. 4 disulfide bridges follow: cysteine 88–cysteine 236, cysteine 111–cysteine 130, cysteine 238–cysteine 258, and cysteine 260–cysteine 269. Histidine 138 contacts Zn(2+). Glutamate 139 is an active-site residue. Histidine 142 and histidine 148 together coordinate Zn(2+). N-linked (GlcNAc...) asparagine glycosylation is found at asparagine 169, asparagine 241, and asparagine 254. The EGF-like domain occupies 232–270 (KYYECSCANNLSCKNHGYPNPSNCSQCNCPYGFGGADCS). 2 N-linked (GlcNAc...) asparagine glycosylation sites follow: asparagine 287 and asparagine 322.

Zn(2+) serves as cofactor. In terms of tissue distribution, expressed in uterine seam (utse) cell.

Its subcellular location is the secreted. Functionally, metalloprotease. The sequence is that of Zinc metalloproteinase nas-22 (nas-22) from Caenorhabditis elegans.